A 546-amino-acid polypeptide reads, in one-letter code: MLSTVQNPRFLLRQCRHFPPKRRRFHSSTPLFLSQPQTLASTDPPSSPPQSQILTIRDNLINRRTTAVELAQLSLNRLRLTEPQINSFISVSETVLREAEEIDAKIARNEELGPLAGVFVGVKDNICTADMPSTGGSRILENYRPPFDATAVKRVKDCGGIVVGKTNLDEFGMGSTTEGSAFQVTANPWDVSRVPGGSSGGSAAAVSARQCVVSLGSDTGGSVRQPASFCGVVGLKPTYGRVSRFGLMAYASSLDVIGCFGSSVADTGILLHAIAGYDGLDSTSSKHEVPNYTSQFMSISSLESKPLKGLRVGLIRETLDDGVDKAVVSSIVGAASHLEELGCTVTEVSLPSFSLGLPAYYILASSESSSNLSRYDGVRYGSQVGADRLNSLYGDSRAKGFGPEVKMRILTGTYALSAGYYDAYYKRAQQVRTLVQKSFKAALNENDILISPAAPSPAYSIGEKKNDPLAMYAGDIMTVNVNLAGLPALVLPCGFVEGGPAGLPVGLQMIGAAFDEEKLLKVGHIFEQMLKGYKFIPPLLADGIAC.

A disordered region spans residues 21–52 (KRRRFHSSTPLFLSQPQTLASTDPPSSPPQSQ). Residues 27-43 (SSTPLFLSQPQTLASTD) are compositionally biased toward polar residues. Residues Lys-123 and Ser-198 each act as charge relay system in the active site. Catalysis depends on Ser-222, which acts as the Acyl-ester intermediate.

The protein belongs to the amidase family. GatA subfamily. In terms of assembly, subunit of the heterotrimeric GatCAB amidotransferase (AdT) complex, composed of A, B and C subunits.

Its subcellular location is the mitochondrion. It localises to the plastid. It is found in the chloroplast stroma. It catalyses the reaction L-glutamyl-tRNA(Gln) + L-glutamine + ATP + H2O = L-glutaminyl-tRNA(Gln) + L-glutamate + ADP + phosphate + H(+). Functionally, allows the formation of correctly charged Gln-tRNA(Gln) through the transamidation of misacylated Glu-tRNA(Gln) in chloroplasts and mitochondria. The reaction takes place in the presence of glutamine and ATP through an activated gamma-phospho-Glu-tRNA(Gln). The chain is Glutamyl-tRNA(Gln) amidotransferase subunit A, chloroplastic/mitochondrial from Vitis vinifera (Grape).